A 116-amino-acid chain; its full sequence is Large ribosomal subunit protein uL18 (116 aa).

The protein belongs to the universal ribosomal protein uL18 family. Part of the 50S ribosomal subunit; part of the 5S rRNA/L5/L18/L25 subcomplex. Contacts the 5S and 23S rRNAs.

In terms of biological role, this is one of the proteins that bind and probably mediate the attachment of the 5S RNA into the large ribosomal subunit, where it forms part of the central protuberance. The chain is Large ribosomal subunit protein uL18 from Saccharophagus degradans (strain 2-40 / ATCC 43961 / DSM 17024).